Consider the following 183-residue polypeptide: Large ribosomal subunit protein uL6 (183 aa).

This sequence belongs to the universal ribosomal protein uL6 family. As to quaternary structure, part of the 50S ribosomal subunit.

Its function is as follows. This protein binds to the 23S rRNA, and is important in its secondary structure. It is located near the subunit interface in the base of the L7/L12 stalk, and near the tRNA binding site of the peptidyltransferase center. This is Large ribosomal subunit protein uL6 from Chlamydia trachomatis serovar D (strain ATCC VR-885 / DSM 19411 / UW-3/Cx).